The sequence spans 2550 residues: Highly reducing polyketide synthase otaA (2550 aa).

The region spanning 9-431 (SEPLAIIGLA…GTNAHAVVED (423 aa)) is the Ketosynthase family 3 (KS3) domain. Active-site for beta-ketoacyl synthase activity residues include cysteine 182, histidine 317, and histidine 355. The segment at 572-894 (FVFTGQGANW…KRYETNGSTI (323 aa)) is malonyl-CoA:ACP transacylase (MAT) domain. Residues 959–1094 (HELLGVPVED…GSVRAETGPP (136 aa)) are N-terminal hotdog fold. The tract at residues 959 to 1252 (HELLGVPVED…DLVQLPANND (294 aa)) is dehydratase (DH) domain. Residues 959-1253 (HELLGVPVED…LVQLPANNDD (295 aa)) enclose the PKS/mFAS DH domain. Residues 1107 to 1253 (AEPVDIAQMY…LVQLPANNDD (147 aa)) form a C-terminal hotdog fold region. The S-adenosyl-L-methionine site is built by isoleucine 1420 and glutamate 1442. The tract at residues 1433–1612 (HAQTGIKILE…GLRPRLIIND (180 aa)) is methyltransferase (CMeT) domain. The interval 1859–1919 (PDEVKIRIHA…DQVMALRTGP (61 aa)) is enoyl reductase (ER) (ER) domain. Residues 2166–2345 (ASYLLIGGFG…PATSVSLGSV (180 aa)) are ketoreductase (KR) domain. Residues 2454-2531 (AAVEVVTRAI…QLAQQAADAS (78 aa)) form the Carrier domain. Serine 2491 is subject to O-(pantetheine 4'-phosphoryl)serine.

Requires pantetheine 4'-phosphate as cofactor.

It catalyses the reaction 4 malonyl-CoA + acetyl-CoA + 5 NADPH + 9 H(+) = 7-methylmellein + 3 CO2 + 5 NADP(+) + 5 CoA + 4 H2O. The protein operates within mycotoxin biosynthesis. Its function is as follows. Highly reducing polyketide synthase; part of the gene cluster that mediates the biosynthesis of ochratoxin A (OTA), a mycotoxin composed of a chlorinated type I polyketide dihydroisocoumarin moiety linked to L-phenylalanine, and demonstrated to have nephrotoxic, immunotoxic, genotoxic, neurotoxic, and teratogenic properties. OtaA catalyzes the condensation of one acetate and 4 malonate units to form the isocoumarin group. The pathway begins with the highly reducing polyketide synthase otaA that catalyzes the formation of the isocoumarin group during the initial stages of biosynthesis, starting from one acetate and 4 malonate units, to originate the characteristic pentaketide skeleton 7-methylmellein (7-MM) of the OTA molecule. The newly identified cyclase otaY might be involved in the polyketide cyclization reaction during the initial steps of the OTA biosynthesis. 7-MM is then oxidized into 7-carboxymellein (also called ochratoxin beta) by the cytochrome P450 monooxygenase otaC. The NRPS encoded by the otaB gene is involved in the linking of phenylalanine to the dihydroisocoumarin ring. The reaction catalyzed by NRPS results in the production of ochratoxin B (OTB), which is the non-chlorinated analog of OTA and which subsequently serves as the substrate of the halogenase otaD for chlorination activity to form the final molecular structure of OTA, containing a chlorine atom in the C-5 position of the molecule. The sequence is that of Highly reducing polyketide synthase otaA from Aspergillus niger (strain ATCC MYA-4892 / CBS 513.88 / FGSC A1513).